The sequence spans 926 residues: Glycogenin (926 aa).

Residues Leu-10, Thr-12, Tyr-16, and Arg-85 each contribute to the UDP site. Residues Leu-10, Thr-12, Tyr-16, Arg-85, Lys-94, Asp-111, Ala-112, Asp-113, Asn-145, Ser-146, Asp-184, Asp-187, and Gln-188 each coordinate UDP-alpha-D-glucose. Asp-111, Ala-112, and Asp-113 together coordinate UDP. Asp-111 contacts Mn(2+). Residue Asp-113 coordinates Mn(2+). Tyr-219 is a glycosylation site (O-linked (Glc...) tyrosine). The UDP site is built by His-236, Gly-239, and Lys-242. His-236 contributes to the Mn(2+) binding site. Positions 239 and 242 each coordinate UDP-alpha-D-glucose. 5 disordered regions span residues Pro-379–Ser-432, Tyr-452–Glu-476, Ser-547–His-584, Met-611–Gln-749, and Leu-768–Asp-903. The segment covering Leu-386–Val-402 has biased composition (pro residues). Positions Thr-404–Pro-413 are enriched in polar residues. Basic and acidic residues predominate over residues Pro-456–Glu-469. Low complexity predominate over residues Ala-557 to Thr-566. Residues Ser-655–Arg-683 show a composition bias toward polar residues. Over residues Glu-692–Asn-704 the composition is skewed to acidic residues. A compositionally biased stretch (basic and acidic residues) spans Asp-733–Asp-745. Residues Ser-788 to Gln-798 show a composition bias toward gly residues. Residues Glu-800–Tyr-812 show a composition bias toward polar residues. 2 stretches are compositionally biased toward low complexity: residues Gln-813–Gln-824 and His-851–Leu-875.

Belongs to the glycosyltransferase 8 family. Glycogenin subfamily. Mn(2+) serves as cofactor.

It localises to the cytoplasm. Its subcellular location is the vacuole. The catalysed reaction is L-tyrosyl-[glycogenin] + UDP-alpha-D-glucose = alpha-D-glucosyl-L-tyrosyl-[glycogenin] + UDP + H(+). It carries out the reaction [1,4-alpha-D-glucosyl](n)-L-tyrosyl-[glycogenin] + UDP-alpha-D-glucose = [1,4-alpha-D-glucosyl](n+1)-L-tyrosyl-[glycogenin] + UDP + H(+). Self-glucosylating initiator of glycogen synthesis. It catalyzes the formation of a short alpha (1,4)-glucosyl chain covalently attached via a glucose 1-O-tyrosyl linkage to internal tyrosine residues and these chains act as primers for the elongation reaction catalyzed by glycogen synthase. The chain is Glycogenin from Cryptococcus neoformans var. grubii serotype A (strain H99 / ATCC 208821 / CBS 10515 / FGSC 9487) (Filobasidiella neoformans var. grubii).